The chain runs to 599 residues: Cytosolic Fe-S cluster assembly factor nar1 (599 aa).

[4Fe-4S] cluster is bound by residues cysteine 20, cysteine 62, cysteine 65, cysteine 68, cysteine 210, cysteine 265, cysteine 468, and cysteine 472.

It belongs to the NARF family.

In terms of biological role, component of the cytosolic Fe/S protein assembly machinery. Required for maturation of extramitochondrial Fe/S proteins. May play a role in the transfer of pre-assembled Fe/S clusters to target apoproteins. The sequence is that of Cytosolic Fe-S cluster assembly factor nar1 (nar1) from Aspergillus terreus (strain NIH 2624 / FGSC A1156).